A 118-amino-acid polypeptide reads, in one-letter code: Large ribosomal subunit protein mL53 (118 aa).

Residues 99–118 (AAAASAPGADKVAPGTSTRR) are disordered.

It belongs to the mitochondrion-specific ribosomal protein mL53 family. As to quaternary structure, component of the mitochondrial ribosome large subunit (39S) which comprises a 16S rRNA and about 50 distinct proteins.

Its subcellular location is the mitochondrion. This is Large ribosomal subunit protein mL53 (Mrpl53) from Mus musculus (Mouse).